The primary structure comprises 153 residues: Ribosomal RNA large subunit methyltransferase H (153 aa).

Residues leucine 70, glycine 102, and 121–126 (LSSMTF) each bind S-adenosyl-L-methionine.

It belongs to the RNA methyltransferase RlmH family. In terms of assembly, homodimer.

The protein localises to the cytoplasm. It catalyses the reaction pseudouridine(1915) in 23S rRNA + S-adenosyl-L-methionine = N(3)-methylpseudouridine(1915) in 23S rRNA + S-adenosyl-L-homocysteine + H(+). In terms of biological role, specifically methylates the pseudouridine at position 1915 (m3Psi1915) in 23S rRNA. This Dictyoglomus thermophilum (strain ATCC 35947 / DSM 3960 / H-6-12) protein is Ribosomal RNA large subunit methyltransferase H.